Here is a 1131-residue protein sequence, read N- to C-terminus: Kinesin-like protein CG14535 (1131 aa).

The segment covering 1-11 (MATTSTSNMSR) has biased composition (polar residues). The tract at residues 1-25 (MATTSTSNMSRNGGFCGALQRAPPP) is disordered. Positions 44–396 (KVKVMLRVAD…IQIASRIHRL (353 aa)) constitute a Kinesin motor domain. Disordered regions lie at residues 472–494 (ALKG…MMMK), 693–753 (DLPD…SRDI), 905–926 (PAYR…QGSL), and 1016–1072 (TSSE…QRHR). The segment covering 483 to 494 (SKSASNSPMMMK) has biased composition (low complexity). The span at 1016-1032 (TSSEAYDSGHDSNSTPR) shows a compositional bias: polar residues.

This sequence belongs to the TRAFAC class myosin-kinesin ATPase superfamily. Kinesin family. KIF26 subfamily.

It localises to the cytoplasm. The protein localises to the cytoskeleton. The sequence is that of Kinesin-like protein CG14535 from Drosophila melanogaster (Fruit fly).